Here is a 305-residue protein sequence, read N- to C-terminus: Zinc transporter ZIP9 (305 aa).

Residues 7–27 (ICLLSLAMLVACYVAGIIPLA) form a helical membrane-spanning segment. Asparagine 29 carries N-linked (GlcNAc...) asparagine glycosylation. Transmembrane regions (helical) follow at residues 35–55 (LKLV…AVIV), 104–124 (AYIG…DQIG), 144–164 (ITTT…LGAA), 174–194 (LIVF…LVSF), and 208–228 (HLLV…LGLS). N-linked (GlcNAc...) asparagine glycosylation is present at asparagine 239. The next 2 helical transmembrane spans lie at 242–262 (GVAM…HVLP) and 284–304 (LEVA…IGHH).

The protein belongs to the ZIP transporter (TC 2.A.5) family.

It is found in the golgi apparatus. Its subcellular location is the trans-Golgi network membrane. It localises to the cell membrane. The protein localises to the cytoplasm. The protein resides in the perinuclear region. It is found in the mitochondrion. Its subcellular location is the nucleus. It catalyses the reaction Zn(2+)(in) = Zn(2+)(out). Its function is as follows. Transports zinc ions across cell and organelle membranes into the cytoplasm and regulates intracellular zinc homeostasis. Participates in the zinc ions efflux out of the secretory compartments. Regulates intracellular zinc level, resulting in the enhancement of AKT1 and MAPK3/MAPK1 (Erk1/2) phosphorylation in response to the BCR activation. Also functions as a membrane androgen receptor that mediates, through a G protein, the non-classical androgen signaling pathway, characterized by the activation of MAPK3/MAPK1 (Erk1/2) and transcription factors CREB1 or ATF1. Moreover, has dual functions as a membrane-bound androgen receptor and as an androgen-dependent zinc transporter both of which are mediated through an inhibitory G protein (Gi) that mediates both MAP kinase and zinc signaling leading to the androgen-dependent apoptotic process. This is Zinc transporter ZIP9 from Gallus gallus (Chicken).